Reading from the N-terminus, the 650-residue chain is Kinesin-like protein KIF22-B (650 aa).

Residues 31–359 (RVRVAVRLRP…LNFAAKSKQI (329 aa)) enclose the Kinesin motor domain. 116-123 (GPTGAGKT) contacts ATP. Positions 365 to 416 (SRETTQTVAQPAMKRPREEAEATTSSRQRKKSKTDSTESSPNSSMESTGKRK) are disordered. Positions 401 to 411 (TESSPNSSMES) are enriched in low complexity. The stretch at 452 to 498 (KRERMALLKKWEESQMEIERLKEKQKELEQKAMEAEARLEKSNNSDL) forms a coiled coil. An Important for regulated proteolytic degradation motif is present at residues 560–563 (GHEN).

Belongs to the TRAFAC class myosin-kinesin ATPase superfamily. Kinesin family. Post-translationally, ubiquitinated, leading to its subsequent proteasomal degradation.

The protein localises to the nucleus. It localises to the cytoplasm. Its subcellular location is the cytoskeleton. Functionally, kinesin family member that is involved in spindle formation and the movements of chromosomes during mitosis and meiosis. Binds to microtubules and to DNA. The chain is Kinesin-like protein KIF22-B (kif22-b) from Xenopus laevis (African clawed frog).